Here is a 325-residue protein sequence, read N- to C-terminus: tRNA (guanine-N(7)-)-methyltransferase (325 aa).

The interval 1 to 101 (MSEATDKQKQ…LEYPKSPESM (101 aa)) is disordered. A compositionally biased stretch (polar residues) spans 51–69 (VSTTPEPEQSDSSATTATI). S-adenosyl-L-methionine-binding positions include Gly122, 145 to 146 (EI), 199 to 200 (NA), and Cys219. The active site involves Asp222. 297-299 (TEE) is an S-adenosyl-L-methionine binding site.

The protein belongs to the class I-like SAM-binding methyltransferase superfamily. TrmB family. As to quaternary structure, forms a complex with TRM82.

Its subcellular location is the nucleus. The enzyme catalyses guanosine(46) in tRNA + S-adenosyl-L-methionine = N(7)-methylguanosine(46) in tRNA + S-adenosyl-L-homocysteine. It functions in the pathway tRNA modification; N(7)-methylguanine-tRNA biosynthesis. Functionally, catalyzes the formation of N(7)-methylguanine at position 46 (m7G46) in tRNA. The polypeptide is tRNA (guanine-N(7)-)-methyltransferase (Candida albicans (strain SC5314 / ATCC MYA-2876) (Yeast)).